We begin with the raw amino-acid sequence, 307 residues long: tRNA dimethylallyltransferase (307 aa).

5 to 12 (GPTGTGKS) lines the ATP pocket. Residue 7-12 (TGTGKS) participates in substrate binding.

This sequence belongs to the IPP transferase family. Monomer. Requires Mg(2+) as cofactor.

The enzyme catalyses adenosine(37) in tRNA + dimethylallyl diphosphate = N(6)-dimethylallyladenosine(37) in tRNA + diphosphate. Its function is as follows. Catalyzes the transfer of a dimethylallyl group onto the adenine at position 37 in tRNAs that read codons beginning with uridine, leading to the formation of N6-(dimethylallyl)adenosine (i(6)A). The protein is tRNA dimethylallyltransferase of Mycobacterium avium (strain 104).